Reading from the N-terminus, the 159-residue chain is Stress-induced protein 1 (159 aa).

One can recognise a sHSP domain in the interval 33–141 (NNFNNIVPQQ…TVRALPIHTS (109 aa)).

This sequence belongs to the small heat shock protein (HSP20) family.

This Caenorhabditis elegans protein is Stress-induced protein 1.